The primary structure comprises 173 residues: Spermidine N(1)-acetyltransferase (173 aa).

One can recognise an N-acetyltransferase domain in the interval 5-162; that stretch reads LTLRALERGD…GRYQDVKRMY (158 aa). Spermine-binding positions include methionine 28, glutamate 33, glutamate 41, and 49-52; that span reads HIHD. Residue glutamate 33 coordinates Mg(2+). The spermidine site is built by glutamate 33 and glutamate 41. Glutamate 75 provides a ligand contact to Mg(2+). 84-86 lines the spermine pocket; that stretch reads EFQ. Acetyl-CoA-binding positions include 87 to 89, 94 to 100, and 127 to 136; these read III, QGKGFAR, and NPKAVHLYEE. The Proton donor role is filled by tyrosine 134.

The protein belongs to the acetyltransferase family. In terms of assembly, homododecamer; dimer of hexamers. Exists in solution in a variety of protein homooligomeric states including dodecamers in an open state. The presence of the polyamines spermidine or spermine shifts the equilibrium to dodecamers and induces the formation of the closed, symmetric dodecamers.

The protein localises to the cytoplasm. It catalyses the reaction an alkane-alpha,omega-diamine + acetyl-CoA = an N-acetylalkane-alpha,omega-diamine + CoA + H(+). The enzyme catalyses spermidine + acetyl-CoA = N(1)-acetylspermidine + CoA + H(+). It carries out the reaction spermidine + acetyl-CoA = N(8)-acetylspermidine + CoA + H(+). The catalysed reaction is spermine + acetyl-CoA = N(1)-acetylspermine + CoA + H(+). It participates in amine and polyamine degradation; spermidine degradation. It functions in the pathway amine and polyamine degradation; spermine degradation. With respect to regulation, allosterically regulated by polyamines. Polyamines trigger conformational changes and induce the symmetric closed dodecameric state of the protein when they bind to their allosteric sites. Its function is as follows. Involved in the protection against polyamine toxicity by regulating their concentration. Catalyzes the transfer of an acetyl group from acetyl coenzyme A (AcCoA) to the primary amino groups of spermidine to yield N(1)- and N(8)-acetylspermidine. It can use polyamines such as spermine and N(1)-acetylspermine, but not putrescine or cadaverine. The protein is Spermidine N(1)-acetyltransferase (speG) of Vibrio cholerae serotype O1 (strain ATCC 39315 / El Tor Inaba N16961).